The sequence spans 159 residues: Phosphopantetheine adenylyltransferase (159 aa).

Threonine 10 contributes to the substrate binding site. Residues 10–11 (TF) and histidine 18 each bind ATP. Lysine 42, leucine 74, and arginine 88 together coordinate substrate. Residues 89 to 91 (GLR), glutamate 99, and 124 to 130 (NSFISST) each bind ATP.

This sequence belongs to the bacterial CoaD family. In terms of assembly, homohexamer. The cofactor is Mg(2+).

The protein localises to the cytoplasm. The enzyme catalyses (R)-4'-phosphopantetheine + ATP + H(+) = 3'-dephospho-CoA + diphosphate. It participates in cofactor biosynthesis; coenzyme A biosynthesis; CoA from (R)-pantothenate: step 4/5. In terms of biological role, reversibly transfers an adenylyl group from ATP to 4'-phosphopantetheine, yielding dephospho-CoA (dPCoA) and pyrophosphate. The polypeptide is Phosphopantetheine adenylyltransferase (Shewanella pealeana (strain ATCC 700345 / ANG-SQ1)).